The chain runs to 186 residues: Peptidyl-tRNA hydrolase (186 aa).

Tyr-14 contributes to the tRNA binding site. His-19 (proton acceptor) is an active-site residue. TRNA-binding residues include Tyr-61, Asn-63, and Asn-107.

Belongs to the PTH family. As to quaternary structure, monomer.

It localises to the cytoplasm. The catalysed reaction is an N-acyl-L-alpha-aminoacyl-tRNA + H2O = an N-acyl-L-amino acid + a tRNA + H(+). Its function is as follows. Hydrolyzes ribosome-free peptidyl-tRNAs (with 1 or more amino acids incorporated), which drop off the ribosome during protein synthesis, or as a result of ribosome stalling. Functionally, catalyzes the release of premature peptidyl moieties from peptidyl-tRNA molecules trapped in stalled 50S ribosomal subunits, and thus maintains levels of free tRNAs and 50S ribosomes. This chain is Peptidyl-tRNA hydrolase, found in Helicobacter pylori (strain HPAG1).